The following is a 346-amino-acid chain: Probable long-chain-alcohol O-fatty-acyltransferase 6 (346 aa).

The next 8 helical transmembrane spans lie at L7 to P27, L36 to V56, S59 to L79, F116 to Y136, F146 to I166, F228 to Y248, T255 to L275, and P289 to S309.

It belongs to the wax synthase family.

It localises to the membrane. It carries out the reaction a long chain fatty alcohol + a fatty acyl-CoA = a wax ester + CoA. Its function is as follows. Catalyzes the final step in the synthesis of long-chain linear esters (waxes). In Arabidopsis thaliana (Mouse-ear cress), this protein is Probable long-chain-alcohol O-fatty-acyltransferase 6 (AT6).